Here is a 632-residue protein sequence, read N- to C-terminus: Cleavage stimulation factor subunit 2 tau variant (632 aa).

Residues 16–94 enclose the RRM domain; sequence RSVFVGNIPY…RALRVDNAAS (79 aa). Disordered stretches follow at residues 201–296 and 365–433; these read IPGK…PGGA and YMGP…TRPM. The span at 213-233 shows a compositional bias: pro residues; it reads PGGPGPSGPGGPGPGPAPGLC. Residues 234–244 are compositionally biased toward low complexity; sequence PGPNVMLNQQN. A compositionally biased stretch (pro residues) spans 275-287; sequence APGPIPAAVPGPG. A compositionally biased stretch (low complexity) spans 365 to 375; the sequence is YMGPPHQGPPM. Composition is skewed to basic and acidic residues over residues 377–390 and 420–433; these read HGHDNRGPASHDMR and RGGRESRGMETRPM. The 1-1; approximate repeat unit spans residues 428-432; sequence METRP. The interval 428-466 is 8 X 5 AA tandem repeats of M-E-T-R-[AG]; sequence METRPMETEVLEPRGMERRMETCAMETRGMDARGLEMRG. The stretch at 433-437 is one 1-2; approximate repeat; the sequence is METEV. A 1-3; approximate repeat occupies 438 to 442; sequence LEPRG. The 1-4; approximate repeat unit spans residues 443–446; the sequence is MERR. The 1-5; approximate repeat unit spans residues 447-451; the sequence is METCA. The stretch at 452–456 is one 1-6 repeat; sequence METRG. A 1-7; approximate repeat occupies 457-461; it reads MDARG. Residues 462-466 form a 1-8; approximate repeat; sequence LEMRG. The stretch at 508-512 is one 2-1; approximate repeat; the sequence is GGTMQ. A 12 X 5 AA tandem repeats of G-[AT]-G-[MI]-Q region spans residues 508-565; it reads GGTMQGAGIQGGGMQGAGMQGGGMQGAGMQGGGMQGAGMQAGMQGASMQGGMQGAGMQ. The stretch at 513-517 is one 2-2 repeat; sequence GAGIQ. A 2-3; approximate repeat occupies 518-522; sequence GGGMQ. Over residues 519–543 the composition is skewed to gly residues; that stretch reads GGMQGAGMQGGGMQGAGMQGGGMQG. Residues 519–590 form a disordered region; the sequence is GGMQGAGMQG…GQSQVTPQDQ (72 aa). A 2-4 repeat occupies 523-527; it reads GAGMQ. The 2-5; approximate repeat unit spans residues 528-532; that stretch reads GGGMQ. The stretch at 533–537 is one 2-6 repeat; the sequence is GAGMQ. The stretch at 538–542 is one 2-7; approximate repeat; that stretch reads GGGMQ. The stretch at 543 to 547 is one 2-8 repeat; it reads GAGMQ. Residues 544–557 show a composition bias toward low complexity; that stretch reads AGMQAGMQGASMQG. A 2-9; approximate repeat occupies 548–551; that stretch reads AGMQ. The 2-10; approximate repeat unit spans residues 552 to 556; that stretch reads GASMQ. The 2-11; approximate repeat unit spans residues 557–560; that stretch reads GGMQ. Over residues 558–574 the composition is skewed to gly residues; sequence GMQGAGMQGASKQGGGQ. The stretch at 561 to 565 is one 2-12 repeat; that stretch reads GAGMQ. The segment covering 575 to 584 has biased composition (low complexity); the sequence is PSSFSPGQSQ. Phosphoserine is present on S579.

As to expression, expressed in testes, where it is restricted to pachytene spermatocytes and spermatids, and in the brain (at protein level).

Its subcellular location is the nucleus. In terms of biological role, may play a significant role in AAUAAA-independent mRNA polyadenylation in germ cells. Directly involved in the binding to pre-mRNAs. The polypeptide is Cleavage stimulation factor subunit 2 tau variant (Cstf2t) (Mus musculus (Mouse)).